Consider the following 190-residue polypeptide: Shikimate kinase (190 aa).

14 to 19 (GAGKST) is a binding site for ATP. A Mg(2+)-binding site is contributed by serine 18. The substrate site is built by aspartate 36, arginine 60, and glycine 82. Arginine 120 is an ATP binding site. Arginine 139 lines the substrate pocket.

Belongs to the shikimate kinase family. As to quaternary structure, monomer. The cofactor is Mg(2+).

The protein resides in the cytoplasm. It carries out the reaction shikimate + ATP = 3-phosphoshikimate + ADP + H(+). It functions in the pathway metabolic intermediate biosynthesis; chorismate biosynthesis; chorismate from D-erythrose 4-phosphate and phosphoenolpyruvate: step 5/7. Catalyzes the specific phosphorylation of the 3-hydroxyl group of shikimic acid using ATP as a cosubstrate. This Thioalkalivibrio sulfidiphilus (strain HL-EbGR7) protein is Shikimate kinase.